A 784-amino-acid chain; its full sequence is DNA ligase (784 aa).

NAD(+) contacts are provided by residues 31–35, 80–81, and E120; these read DAEYD and SL. K122 functions as the N6-AMP-lysine intermediate in the catalytic mechanism. The NAD(+) site is built by R143, E180, K296, and K320. Positions 414, 417, 444, and 450 each coordinate Zn(2+). In terms of domain architecture, BRCT spans 701–784; sequence AEGLPLAGQT…AFMAEQGITL (84 aa).

The protein belongs to the NAD-dependent DNA ligase family. LigA subfamily. Mg(2+) is required as a cofactor. Mn(2+) serves as cofactor.

The enzyme catalyses NAD(+) + (deoxyribonucleotide)n-3'-hydroxyl + 5'-phospho-(deoxyribonucleotide)m = (deoxyribonucleotide)n+m + AMP + beta-nicotinamide D-nucleotide.. Its function is as follows. DNA ligase that catalyzes the formation of phosphodiester linkages between 5'-phosphoryl and 3'-hydroxyl groups in double-stranded DNA using NAD as a coenzyme and as the energy source for the reaction. It is essential for DNA replication and repair of damaged DNA. The sequence is that of DNA ligase from Pseudomonas entomophila (strain L48).